Here is a 300-residue protein sequence, read N- to C-terminus: Alpha-ketoglutarate-dependent dioxygenase alkB homolog 4 (300 aa).

Residue Ala-2 is modified to N-acetylalanine. Residues 148–272 (PVEQCNLDYS…RVCATFRELS (125 aa)) form the Fe2OG dioxygenase domain. Fe cation-binding residues include His-167, Asp-169, and His-252. Residue Arg-263 coordinates 2-oxoglutarate.

It belongs to the alkB family. As to quaternary structure, interacts with ZFHX3, MLLT3, MLLT1, HSF4, EP300, TES, EIF3C, MTMR6 and PSMA6. Fe(2+) is required as a cofactor.

It is found in the cytoplasm. The protein localises to the nucleus. Its subcellular location is the nucleolus. It localises to the midbody. The enzyme catalyses an N(6)-methyl-2'-deoxyadenosine in DNA + 2-oxoglutarate + O2 = a 2'-deoxyadenosine in DNA + formaldehyde + succinate + CO2. It carries out the reaction N(6)-methyl-L-lysyl-[protein] + 2-oxoglutarate + O2 = L-lysyl-[protein] + formaldehyde + succinate + CO2. Functionally, dioxygenase that mediates demethylation of actin monomethylated at 'Lys-84' (K84me1), thereby acting as a regulator of actomyosin-processes. Demethylation of actin K84me1 is required for maintaining actomyosin dynamics supporting normal cleavage furrow ingression during cytokinesis and cell migration. In addition to proteins, also demethylates DNA: specifically demethylates DNA methylated on the 6th position of adenine (N(6)-methyladenosine) DNA, thereby regulating Polycomb silencing. In Mus musculus (Mouse), this protein is Alpha-ketoglutarate-dependent dioxygenase alkB homolog 4.